The sequence spans 764 residues: DNA replication regulator DPB11 (764 aa).

3 BRCT domains span residues 1–99, 129–220, and 322–418; these read MKPF…MTGS, TNIT…PYYL, and NSTL…DLWS. Disordered stretches follow at residues 651–675 and 710–764; these read ETDSGRKKRSVSSSIMDVSSERQMP and TEQP…ELDS. Residues 739-751 are compositionally biased toward basic and acidic residues; that stretch reads QDKKRTASLEKPM.

In terms of assembly, interacts with SLD2.

The protein resides in the nucleus. Its function is as follows. Has a role in the initiation of DNA replication. Required at S-phase checkpoint. Required for the association of PSF1 with origins. Also required for the proper activation of RAD53 in response to DNA damage and replication blocks. Multicopy suppressor of DPB2 mutation. Overexpression restores the growth defect conferred by POL2 mutation. This chain is DNA replication regulator DPB11 (DPB11), found in Saccharomyces cerevisiae (strain ATCC 204508 / S288c) (Baker's yeast).